Here is a 1321-residue protein sequence, read N- to C-terminus: Serine/threonine-protein kinase SIK3 (1321 aa).

A disordered region spans residues 1–59 (MAAAAASGAGGAAGAGTGGAGPAGRLLPPPAPGSPAAPAAVSPAAGQPRPPAPASRGPM). The segment covering 8–22 (GAGGAAGAGTGGAGP) has biased composition (gly residues). Positions 36-47 (AAPAAVSPAAGQ) are enriched in low complexity. A Protein kinase domain is found at 66 to 317 (YEIDRTIGKG…MEQICKHKWM (252 aa)). T71 carries the post-translational modification Phosphothreonine. Residues 72–80 (IGKGNFAVV) and K95 each bind ATP. E113 carries the post-translational modification Phosphothreonine. The Proton acceptor role is filled by D188. T221 carries the phosphothreonine; by LKB1 modification. The UBA domain maps to 344-384 (PLNEDVLLAMEDMGLDKEQTLQSLRSDAYDHYSAIYSLLCD). T469 is subject to Phosphothreonine. Phosphoserine is present on residues S551, S591, and S592. The segment at 585-614 (TPVDEESSDGEPDQEAVQSSTYKDSNTLHL) is disordered. The segment covering 587 to 598 (VDEESSDGEPDQ) has biased composition (acidic residues). Residues 600–613 (AVQSSTYKDSNTLH) are compositionally biased toward polar residues. A phosphoserine mark is found at S626 and S647. Residues 727 to 772 (IQPSSPPPNHPNNHLFRQPSNSPPPMSSAMIQPHGAASSSQFQGLP) form a disordered region. Over residues 763–772 (ASSSQFQGLP) the composition is skewed to polar residues. The residue at position 866 (S866) is a Phosphoserine. The segment at 894-945 (LFSDQSRGSPSSYSPSTGVGFSPTQALKVPPLDQFPTFPPSAHQQPPHYTTS) is disordered. Residues 896-909 (SDQSRGSPSSYSPS) are compositionally biased toward low complexity. The span at 935-945 (AHQQPPHYTTS) shows a compositional bias: polar residues. S978 is modified (phosphoserine). R986 is subject to Omega-N-methylarginine. The span at 1256-1265 (SLMGSQQFQD) shows a compositional bias: polar residues. Residues 1256–1289 (SLMGSQQFQDGENEECGASLGGHEHPDLSDGSQH) form a disordered region.

Belongs to the protein kinase superfamily. CAMK Ser/Thr protein kinase family. SNF1 subfamily. Binds to and is activated by YWHAZ when phosphorylated on Thr-221. Interacts with 14-3-3 proteins. Interacts with HDAC4; this interaction leads to HDAC4 retention in the cytoplasm. Interacts with DEPTOR, MLST8/GbetaL, RICTOR and RPTOR. Mg(2+) serves as cofactor. In terms of processing, phosphorylated at Thr-221 by STK11/LKB1 in complex with STE20-related adapter-alpha (STRADA) pseudo kinase and CAB39. Phosphorylation at Thr-221 is inhibited in response to PTHLH/PTHrP. Phosphorylated at Thr-469 and Ser-551 in response to cAMP signaling. As to expression, expressed in chondrocytes.

The protein resides in the cytoplasm. The catalysed reaction is L-seryl-[protein] + ATP = O-phospho-L-seryl-[protein] + ADP + H(+). The enzyme catalyses L-threonyl-[protein] + ATP = O-phospho-L-threonyl-[protein] + ADP + H(+). Activated by phosphorylation on Thr-221. Positive regulator of mTOR signaling that functions by triggering the degradation of DEPTOR, an mTOR inhibitor. Involved in the dynamic regulation of mTOR signaling in chondrocyte differentiation during skeletogenesis. Negatively regulates cAMP signaling pathway possibly by acting on CRTC2/TORC2 and CRTC3/TORC3. Prevents HDAC4 translocation to the nucleus. This chain is Serine/threonine-protein kinase SIK3, found in Homo sapiens (Human).